Consider the following 271-residue polypeptide: p-hydroxybenzoate hydroxylase transcriptional activator (271 aa).

One can recognise an HTH iclR-type domain in the interval 23 to 83 (IAGLAKGLAL…TDEHYFWLTH (61 aa)). A DNA-binding region (H-T-H motif) is located at residues 45-64 (VTQVAERTGISRTAARRYLK). The IclR-ED domain maps to 98-271 (LPKVAQSFLN…NTANELRNLV (174 aa)).

Functionally, positive regulator of the pobA gene for p-hydroxybenzoate hydroxylase. The protein is p-hydroxybenzoate hydroxylase transcriptional activator (pobR) of Acinetobacter baylyi (strain ATCC 33305 / BD413 / ADP1).